We begin with the raw amino-acid sequence, 400 residues long: Lysophospholipid transporter LplT (400 aa).

11 consecutive transmembrane segments (helical) span residues 19–39, 53–73, 91–111, 139–159, 164–184, 227–247, 257–277, 281–301, 304–324, 352–372, and 373–393; these read VIVA…ATLA, VLQM…GQIA, AGAA…LVGI, LMEA…GVLA, IAAL…NLFI, LFWG…PVAL, YLNA…AKLV, TVSR…IFSL, ALLP…FFVV, NSAM…GVPA, and VAIG…LWIW.

The protein belongs to the major facilitator superfamily. LplT (TC 2.A.1.42) family.

Its subcellular location is the cell inner membrane. Functionally, catalyzes the facilitated diffusion of 2-acyl-glycero-3-phosphoethanolamine (2-acyl-GPE) into the cell. This chain is Lysophospholipid transporter LplT, found in Salmonella gallinarum (strain 287/91 / NCTC 13346).